Consider the following 1145-residue polypeptide: Cellulose synthase-like protein D3 (1145 aa).

Residues 1–19 (MASNNHFMNSRSNLSTNSD) are compositionally biased toward polar residues. Disordered stretches follow at residues 1 to 38 (MASNNHFMNSRSNLSTNSDAAEAERHQQPVSNSVTFAR) and 189 to 208 (DNNKQQRPMLPPPAGGSKMD). 2 helical membrane-spanning segments follow: residues 289 to 309 (VISPYRLLILIRIVVLALFLM) and 319 to 339 (AIWLWGMSVVCELWFALSWLL). D419 is a catalytic residue. S755 carries the phosphoserine modification. D848 is a catalytic residue. Transmembrane regions (helical) follow at residues 930-950 (FFLIVYCFLPALSLFSGQFIV), 956-976 (TFLVYLLIISITLCLLALLEI), 1002-1022 (LAAVIQGLLKVVAGIEISFTL), 1045-1065 (SLMIPPITIMMVNLIAIAVGF), 1079-1099 (LIGGVFFSFWVLAHLYPFAKG), and 1109-1129 (TIVYVWSGLVAITISLLWVAI).

This sequence belongs to the glycosyltransferase 2 family. Plant cellulose synthase-like D subfamily. In terms of tissue distribution, preferentially expressed in root hair cells. Expressed in roots, leaves, stems, flowers and siliques.

The protein resides in the golgi apparatus membrane. Functionally, thought to be a Golgi-localized beta-glycan synthase that polymerize the backbones of noncellulosic polysaccharides (hemicelluloses) of plant cell wall. Required for synthesis of a cell wall polysaccharide essential for root hair elongation, but not initiation. May be the functional ortholog of rice CSLD1. This Arabidopsis thaliana (Mouse-ear cress) protein is Cellulose synthase-like protein D3 (CSLD3).